The following is a 57-amino-acid chain: Benzylsuccinate synthase gamma subunit (57 aa).

In terms of assembly, heterohexamer composed of 2 alpha subunits, 2 beta subunits and 2 gamma subunits.

It catalyses the reaction toluene + fumarate = 2-benzylsuccinate. The protein operates within xenobiotic degradation; toluene degradation. With respect to regulation, activated by the benzylsuccinate synthase activating enzyme BssD. Rapidly inactivated by oxygen. In terms of biological role, catalyzes the addition of fumarate to the methyl group of toluene, leading to the formation of benzylsuccinate. In Thauera aromatica, this protein is Benzylsuccinate synthase gamma subunit (bssC).